Reading from the N-terminus, the 253-residue chain is Probable transcriptional regulatory protein SynRCC307_1833 (253 aa).

This sequence belongs to the TACO1 family.

The protein localises to the cytoplasm. The protein is Probable transcriptional regulatory protein SynRCC307_1833 of Synechococcus sp. (strain RCC307).